Consider the following 97-residue polypeptide: UPF0235 protein Daro_3887 (97 aa).

It belongs to the UPF0235 family.

This Dechloromonas aromatica (strain RCB) protein is UPF0235 protein Daro_3887.